A 112-amino-acid chain; its full sequence is UPF0145 protein CD630_17110 (112 aa).

It belongs to the UPF0145 family.

The sequence is that of UPF0145 protein CD630_17110 from Clostridioides difficile (strain 630) (Peptoclostridium difficile).